The chain runs to 446 residues: Glutamine synthetase (446 aa).

Residues 18 to 103 (ENVRYLRLQF…LICDVFKTDG (86 aa)) form the GS beta-grasp domain. In terms of domain architecture, GS catalytic spans 110 to 446 (PRANLKRVLR…WEREQYIKQY (337 aa)). The Mg(2+) site is built by Glu-134 and Glu-136. An ATP-binding site is contributed by Glu-186. The Mg(2+) site is built by Glu-191 and Glu-198. L-glutamate-binding positions include 242 to 243 (NG) and Gly-243. Residue His-247 coordinates Mg(2+). Ser-251 lines the ATP pocket. Residues Arg-300, Glu-306, and Arg-318 each contribute to the L-glutamate site. ATP is bound by residues Arg-318 and Arg-323. Residue Glu-335 coordinates Mg(2+). Arg-337 lines the L-glutamate pocket.

Belongs to the glutamine synthetase family. Oligomer of 12 subunits arranged in the form of two hexagons. In its feedback-inhibited form, interacts with TnrA in order to block its DNA-binding activity. It depends on Mg(2+) as a cofactor.

The protein resides in the cytoplasm. The enzyme catalyses L-glutamate + NH4(+) + ATP = L-glutamine + ADP + phosphate + H(+). Inhibited by glutamine. Functionally, glutamine synthetase (GS) is an unusual multitasking protein that functions as an enzyme, a transcription coregulator, and a chaperone in ammonium assimilation and in the regulation of genes involved in nitrogen metabolism. It catalyzes the ATP-dependent biosynthesis of glutamine from glutamate and ammonia. Feedback-inhibited GlnA also interacts with and regulates the activity of the transcriptional regulator TnrA. During nitrogen limitation, TnrA is in its DNA-binding active state and turns on the transcription of genes required for nitrogen assimilation. Under conditions of nitrogen excess, feedback-inhibited GlnA forms a stable complex with TnrA, which inhibits its DNA-binding activity. In contrast, feedback-inhibited GlnA acts as a chaperone to stabilize the DNA-binding activity of GlnR, which represses the transcription of nitrogen assimilation genes. This chain is Glutamine synthetase, found in Staphylococcus epidermidis (strain ATCC 35984 / DSM 28319 / BCRC 17069 / CCUG 31568 / BM 3577 / RP62A).